The sequence spans 286 residues: Protein N-terminal amidase (286 aa).

The CN hydrolase domain maps to 1–286 (MKFGCVQFFP…NGIVVGELEK (286 aa)). Glu-43 acts as the Proton acceptor in catalysis. The active-site Proton donor is the Lys-121. The active-site Nucleophile is the Cys-155.

Belongs to the carbon-nitrogen hydrolase superfamily.

The protein localises to the cytoplasm. It is found in the nucleus. Its function is as follows. Deamidates N-terminal Asn and Gln. Component of a targeting complex in the N-end rule pathway. The protein is Protein N-terminal amidase (nta1) of Schizosaccharomyces pombe (strain 972 / ATCC 24843) (Fission yeast).